The chain runs to 295 residues: 15-cis-phytoene synthase (295 aa).

Belongs to the phytoene/squalene synthase family. ATP is required as a cofactor. It depends on Mn(2+) as a cofactor.

The catalysed reaction is 2 (2E,6E,10E)-geranylgeranyl diphosphate = 15-cis-phytoene + 2 diphosphate. It functions in the pathway carotenoid biosynthesis; phytoene biosynthesis. With respect to regulation, significant inhibition is seen at GGPP concentrations above 100 uM. Its function is as follows. Involved in the biosynthesis of carotenoids. Catalyzes stereoselectively the condensation of two molecules of geranylgeranyl diphosphate (GGPP) to give prephytoene diphosphate (PPPP) and the subsequent rearrangement of the cyclopropylcarbinyl intermediate to yield 15-cis-phytoene. This Enterobacter agglomerans (Erwinia herbicola) protein is 15-cis-phytoene synthase (crtB).